We begin with the raw amino-acid sequence, 204 residues long: Arginine exporter protein ArgO (204 aa).

Transmembrane regions (helical) follow at residues 1 to 21 (MFAV…PLGP), 37 to 57 (LMVA…GIFG), 67 to 87 (LLLG…GWGA), 111 to 131 (IIAT…DTFV), 147 to 167 (WFAL…ALLA), and 179 to 199 (VQRV…LQLA).

Belongs to the LysE/ArgO transporter (TC 2.A.75) family.

The protein localises to the cell inner membrane. The catalysed reaction is L-arginine(in) = L-arginine(out). In terms of biological role, involved in the export of arginine. Important to control the intracellular level of arginine and the correct balance between arginine and lysine. This is Arginine exporter protein ArgO from Pectobacterium carotovorum subsp. carotovorum (strain PC1).